The following is a 353-amino-acid chain: Photosystem II D2 protein (353 aa).

Position 2 is an N-acetylthreonine (Thr-2). A Phosphothreonine modification is found at Thr-2. Residues 41-61 traverse the membrane as a helical segment; the sequence is CAYFALGGWFTGTTFVTSWYT. His-118 is a binding site for chlorophyll a. Residues 125 to 141 form a helical membrane-spanning segment; sequence GFMLRQFELARSVQLRP. 2 residues coordinate pheophytin a: Gln-130 and Asn-143. Residues 153–166 form a helical membrane-spanning segment; the sequence is VFVSVFLIYPLGQS. His-198 is a chlorophyll a binding site. The helical transmembrane segment at 208–228 threads the bilayer; that stretch reads AALLCAIHGATVENTLFEDGD. A plastoquinone-binding residues include His-215 and Phe-262. Residue His-215 participates in Fe cation binding. His-269 contributes to the Fe cation binding site. A helical transmembrane segment spans residues 279 to 295; it reads GLWMSALGVVGLALNLR.

It belongs to the reaction center PufL/M/PsbA/D family. In terms of assembly, PSII is composed of 1 copy each of membrane proteins PsbA, PsbB, PsbC, PsbD, PsbE, PsbF, PsbH, PsbI, PsbJ, PsbK, PsbL, PsbM, PsbT, PsbX, PsbY, PsbZ, Psb30/Ycf12, at least 3 peripheral proteins of the oxygen-evolving complex and a large number of cofactors. It forms dimeric complexes. The D1/D2 heterodimer binds P680, chlorophylls that are the primary electron donor of PSII, and subsequent electron acceptors. It shares a non-heme iron and each subunit binds pheophytin, quinone, additional chlorophylls, carotenoids and lipids. There is also a Cl(-1) ion associated with D1 and D2, which is required for oxygen evolution. The PSII complex binds additional chlorophylls, carotenoids and specific lipids. serves as cofactor.

The protein localises to the plastid. Its subcellular location is the chloroplast thylakoid membrane. It carries out the reaction 2 a plastoquinone + 4 hnu + 2 H2O = 2 a plastoquinol + O2. Photosystem II (PSII) is a light-driven water:plastoquinone oxidoreductase that uses light energy to abstract electrons from H(2)O, generating O(2) and a proton gradient subsequently used for ATP formation. It consists of a core antenna complex that captures photons, and an electron transfer chain that converts photonic excitation into a charge separation. The D1/D2 (PsbA/PsbD) reaction center heterodimer binds P680, the primary electron donor of PSII as well as several subsequent electron acceptors. D2 is needed for assembly of a stable PSII complex. This is Photosystem II D2 protein from Morus indica (Mulberry).